The primary structure comprises 425 residues: MAYNPKILQKPKEGEEITIKDNKLHVPNHPIIPFIEGDGIGSDITPAMIKVVDSAVQKAYKGEKKIAWYEVFVGEKCYQKFKDYKELSPEEQWLLPDTIEAINHYKVSIKGPLTTPIGEGFRSLNVALRQKMDLYVCLRPVRWYGSPSPVKEPQKVDMVIFRENSEDIYAGIEWQEGSAEAKKLIHFLQNELKVKKIRFPESSGIGVKPISKEGTERLVRKAIEYAIDNDKPSVTFVHKGNIMKYTEGAFMKWGYALAQKEFNAQVIDKGPWCSLKNPKNGKEIIIKDMIADAFLQQILLRPSEYSVIATMNLNGDYISDALAAMVGGIGIAPGANLNDTVGMFEATHGTAPKYAGLDKVNPGSIILSAEMMLRHMGWVEAADLIVSAMEKAIKSKKVTYDFARLMDGAKEVKCSEFASVMIENM.

Residue threonine 114 coordinates NADP(+). 5 residues coordinate D-threo-isocitrate: serine 123, asparagine 125, arginine 129, arginine 139, and arginine 162. A Mg(2+)-binding site is contributed by aspartate 316. NADP(+) is bound by residues 348 to 354, asparagine 361, tyrosine 400, and arginine 404; that span reads HGTAPKY.

It belongs to the isocitrate and isopropylmalate dehydrogenases family. As to quaternary structure, homodimer. Mg(2+) is required as a cofactor. Mn(2+) serves as cofactor.

The catalysed reaction is D-threo-isocitrate + NADP(+) = 2-oxoglutarate + CO2 + NADPH. Its function is as follows. Catalyzes the oxidative decarboxylation of isocitrate to 2-oxoglutarate and carbon dioxide with the concomitant reduction of NADP(+). The chain is Isocitrate dehydrogenase [NADP] (icd) from Helicobacter pylori (strain ATCC 700392 / 26695) (Campylobacter pylori).